We begin with the raw amino-acid sequence, 83 residues long: Translational regulator CsrA (83 aa).

This sequence belongs to the CsrA/RsmA family. As to quaternary structure, homodimer; the beta-strands of each monomer intercalate to form a hydrophobic core, while the alpha-helices form wings that extend away from the core.

It localises to the cytoplasm. Functionally, a translational regulator that binds mRNA to regulate translation initiation and/or mRNA stability. Usually binds in the 5'-UTR at or near the Shine-Dalgarno sequence preventing ribosome-binding, thus repressing translation. Its main target seems to be the major flagellin gene, while its function is anatagonized by FliW. The protein is Translational regulator CsrA of Nocardioides sp. (strain ATCC BAA-499 / JS614).